The chain runs to 101 residues: Small ribosomal subunit protein uS14 (101 aa).

The protein belongs to the universal ribosomal protein uS14 family. As to quaternary structure, part of the 30S ribosomal subunit. Contacts proteins S3 and S10.

Its function is as follows. Binds 16S rRNA, required for the assembly of 30S particles and may also be responsible for determining the conformation of the 16S rRNA at the A site. The protein is Small ribosomal subunit protein uS14 of Cupriavidus metallidurans (strain ATCC 43123 / DSM 2839 / NBRC 102507 / CH34) (Ralstonia metallidurans).